We begin with the raw amino-acid sequence, 256 residues long: Ciliary microtubule associated protein 1A (256 aa).

3 STPGR repeats span residues 66-92 (PGPGYLVPSNITVKGKDGTPAYSIYGR), 181-206 (PGPGTYRVIDPGTYKHKPPQYSMTAR), and 217-242 (PGPGAYSPEKVVMSKAQAPNFSFGIR). Positions 91–115 (GRPRDISSFRTPGPGSYSPERAGKS) are disordered.

Belongs to the CIMAP family.

It localises to the cytoplasm. It is found in the cytoskeleton. The protein localises to the flagellum axoneme. Functionally, outer dense fibers are filamentous structures located on the outside of the axoneme in the midpiece and principal piece of the mammalian sperm tail. May help to maintain the passive elastic structures and elastic recoil of the sperm tail. The chain is Ciliary microtubule associated protein 1A (cimap1a) from Xenopus laevis (African clawed frog).